Here is a 318-residue protein sequence, read N- to C-terminus: Biotin synthase (318 aa).

The Radical SAM core domain maps to 44–273 (LCGNKFDLCT…TVQIRLAGGR (230 aa)). The [4Fe-4S] cluster site is built by Cys62, Cys66, and Cys69. [2Fe-2S] cluster contacts are provided by Ser106, Cys138, Cys198, and Arg268.

It belongs to the radical SAM superfamily. Biotin synthase family. Homodimer. The cofactor is [4Fe-4S] cluster. [2Fe-2S] cluster serves as cofactor.

It catalyses the reaction (4R,5S)-dethiobiotin + (sulfur carrier)-SH + 2 reduced [2Fe-2S]-[ferredoxin] + 2 S-adenosyl-L-methionine = (sulfur carrier)-H + biotin + 2 5'-deoxyadenosine + 2 L-methionine + 2 oxidized [2Fe-2S]-[ferredoxin]. The protein operates within cofactor biosynthesis; biotin biosynthesis; biotin from 7,8-diaminononanoate: step 2/2. Functionally, catalyzes the conversion of dethiobiotin (DTB) to biotin by the insertion of a sulfur atom into dethiobiotin via a radical-based mechanism. The polypeptide is Biotin synthase (Clostridium botulinum (strain Hall / ATCC 3502 / NCTC 13319 / Type A)).